A 373-amino-acid polypeptide reads, in one-letter code: 4-hydroxy-3-methylbut-2-en-1-yl diphosphate synthase (flavodoxin) (373 aa).

Positions 269, 272, 304, and 311 each coordinate [4Fe-4S] cluster.

Belongs to the IspG family. [4Fe-4S] cluster is required as a cofactor.

The enzyme catalyses (2E)-4-hydroxy-3-methylbut-2-enyl diphosphate + oxidized [flavodoxin] + H2O + 2 H(+) = 2-C-methyl-D-erythritol 2,4-cyclic diphosphate + reduced [flavodoxin]. The protein operates within isoprenoid biosynthesis; isopentenyl diphosphate biosynthesis via DXP pathway; isopentenyl diphosphate from 1-deoxy-D-xylulose 5-phosphate: step 5/6. Converts 2C-methyl-D-erythritol 2,4-cyclodiphosphate (ME-2,4cPP) into 1-hydroxy-2-methyl-2-(E)-butenyl 4-diphosphate. The sequence is that of 4-hydroxy-3-methylbut-2-en-1-yl diphosphate synthase (flavodoxin) from Baumannia cicadellinicola subsp. Homalodisca coagulata.